A 727-amino-acid polypeptide reads, in one-letter code: FACT complex subunit Ssrp1 (727 aa).

Disordered regions lie at residues 458-565 (AEAR…AFML) and 596-727 (ELKD…EGSD). 2 stretches are compositionally biased toward acidic residues: residues 464-479 (EEED…ESTD) and 487-508 (NESD…DDSD). The span at 510–519 (SGGGGDGGTD) shows a compositional bias: gly residues. Composition is skewed to basic and acidic residues over residues 529–555 (KKNE…DTGK), 596–620 (ELKD…EMRN), and 675–703 (DQEK…KSES). Positions 556–622 (PKRGTSAFML…RYQEEMRNYK (67 aa)) form a DNA-binding region, HMG box. Residues 704-727 (EGGDSDDASNASEDDDEEEDEGSD) show a composition bias toward acidic residues.

Belongs to the SSRP1 family. In terms of assembly, component of the FACT complex, a stable heterodimer of dre4/spt16 and Ssrp.

The protein localises to the nucleus. The protein resides in the chromosome. It is found in the nucleolus. Functionally, component of the FACT complex, a general chromatin factor that acts to reorganize nucleosomes. The FACT complex is involved in multiple processes that require DNA as a template such as mRNA elongation, DNA replication and DNA repair. During transcription elongation the FACT complex acts as a histone chaperone that both destabilizes and restores nucleosomal structure. It facilitates the passage of RNA polymerase II and transcription by promoting the dissociation of one histone H2A-H2B dimer from the nucleosome, then subsequently promotes the reestablishment of the nucleosome following the passage of RNA polymerase II. Binds specifically to single-stranded DNA and RNA with highest affinity for nucleotides G and U. The FACT complex is required for expression of Hox genes. This chain is FACT complex subunit Ssrp1 (Ssrp), found in Drosophila pseudoobscura pseudoobscura (Fruit fly).